The sequence spans 901 residues: MLIKLLTKVFGSRNDRTLRRMRKVVNIINAMEPEMEKLSDEELKGKTAEFRARLEKGEVLENLIPEAFAVVREASKRVFGMRHFDVQLLGGMVLNERCIAEMRTGEGKTLTATLPAYLNALTGKGVHVVTVNDYLAQRDAENNRPLFEFLGLTVGINLPGMPAPAKREAYAADITYGTNNEYGFDYLRDNMAFSPEERVQRKLHYALVDEVDSILIDEARTPLIISGPAEDSSEMYKRVNKIIPHLIRQEKEDSETFQGEGHFSVDEKSRQVNLTERGLVLIEELLVKEGIMDEGESLYSPANIMLMHHVTAALRAHALFTRDVDYIVKDGEVIIVDEHTGRTMQGRRWSDGLHQAVEAKEGVQIQNENQTLASITFQNYFRLYEKLAGMTGTADTEAFEFSSIYKLDTVVVPTNRPMIRKDLPDLVYMTEAEKIQAIIEDIKERTAKGQPVLVGTISIEKSELVSNELTKAGIKHNVLNAKFHANEAAIVAQAGYPAAVTIATNMAGRGTDIVLGGSWQAEVAALENPTAEQIEKIKADWQVRHDAVLAAGGLHIIGTERHESRRIDNQLRGRSGRQGDAGSSRFYLSMEDALMRIFASDRVSGMMRKLGMKPGEAIEHPWVTKAIANAQRKVESRNFDIRKQLLEYDDVANDQRRAIYSQRNELLDVSDVSETINSIREDVFKATIDAYIPPQSLEEMWDIPGLQERLKNDFDLDLPIAEWLDKEPELHEETLRERILAQSIEVYQRKEEVVGAEMMRHFEKGVMLQTLDSLWKEHLAAMDYLRQGIHLRGYAQKDPKQEYKRESFSMFAAMLESLKYEVISTLSKVQVRMPEEVEELEQQRRMEAERLAQMQQLSYQDDDSAAAAALAAQTGERKVGRNDPCPCGSGKKYKQCHGRLQ.

ATP-binding positions include glutamine 87, 105 to 109 (GEGKT), and aspartate 512. The disordered stretch occupies residues 868-901 (AALAAQTGERKVGRNDPCPCGSGKKYKQCHGRLQ). Zn(2+) contacts are provided by cysteine 885, cysteine 887, cysteine 896, and histidine 897. Positions 891–901 (KKYKQCHGRLQ) are enriched in basic residues.

It belongs to the SecA family. In terms of assembly, monomer and homodimer. Part of the essential Sec protein translocation apparatus which comprises SecA, SecYEG and auxiliary proteins SecDF-YajC and YidC. Requires Zn(2+) as cofactor.

The protein resides in the cell inner membrane. Its subcellular location is the cytoplasm. It carries out the reaction ATP + H2O + cellular proteinSide 1 = ADP + phosphate + cellular proteinSide 2.. Part of the Sec protein translocase complex. Interacts with the SecYEG preprotein conducting channel. Has a central role in coupling the hydrolysis of ATP to the transfer of proteins into and across the cell membrane, serving both as a receptor for the preprotein-SecB complex and as an ATP-driven molecular motor driving the stepwise translocation of polypeptide chains across the membrane. This Escherichia coli O45:K1 (strain S88 / ExPEC) protein is Protein translocase subunit SecA.